A 238-amino-acid polypeptide reads, in one-letter code: Orotidine 5'-phosphate decarboxylase (238 aa).

Residues Asp10, Lys32, 59–68 (DLKLHDIPNT), Thr122, Arg184, Gln193, Gly213, and Arg214 each bind substrate. Lys61 acts as the Proton donor in catalysis.

The protein belongs to the OMP decarboxylase family. Type 1 subfamily. In terms of assembly, homodimer.

The catalysed reaction is orotidine 5'-phosphate + H(+) = UMP + CO2. It participates in pyrimidine metabolism; UMP biosynthesis via de novo pathway; UMP from orotate: step 2/2. In terms of biological role, catalyzes the decarboxylation of orotidine 5'-monophosphate (OMP) to uridine 5'-monophosphate (UMP). This Bacillus cereus (strain B4264) protein is Orotidine 5'-phosphate decarboxylase.